Consider the following 436-residue polypeptide: uncharacterized protein (436 aa).

A signal peptide spans 1–20; that stretch reads MKCAVAILLVCLTLQQAAYG. Coiled-coil stretches lie at residues 25-87, 154-207, and 247-329; these read EEVK…ALRN, MRKT…NSVE, and ESWG…ASLL. Over residues 371-390 the composition is skewed to acidic residues; the sequence is EEEIAPSTEEDGSEELEADS. The disordered stretch occupies residues 371 to 419; it reads EEEIAPSTEEDGSEELEADSYDSKVGGESPISQRTEERQGAEERSRLRR. Positions 404 to 415 are enriched in basic and acidic residues; the sequence is RTEERQGAEERS.

Component of the acid-insoluble organic matrix of the aragonitic skeleton (at protein level).

The protein resides in the secreted. This is an uncharacterized protein from Acropora millepora (Staghorn coral).